We begin with the raw amino-acid sequence, 782 residues long: Coiled-coil alpha-helical rod protein 1 (782 aa).

Basic and acidic residues-rich tracts occupy residues 62–74 and 208–218; these read ERDVSSDRQEPGR and ETRRAGEAKEL. 2 disordered regions span residues 62-82 and 177-218; these read ERDVSSDRQEPGRRGRSWGLE and EQLS…AKEL. Coiled-coil stretches lie at residues 82 to 314, 344 to 437, and 498 to 691; these read EGSQ…ELTR, LMVQ…NAVS, and VADV…QQEG.

The protein resides in the cytoplasm. It is found in the nucleus. May be a regulator of keratinocyte proliferation or differentiation. This Pan troglodytes (Chimpanzee) protein is Coiled-coil alpha-helical rod protein 1 (CCHCR1).